A 130-amino-acid polypeptide reads, in one-letter code: Small ribosomal subunit protein uS9 (130 aa).

It belongs to the universal ribosomal protein uS9 family.

The protein is Small ribosomal subunit protein uS9 of Sodalis glossinidius (strain morsitans).